The primary structure comprises 326 residues: Centriolar satellite-associated tubulin polyglutamylase complex regulator 1 (326 aa).

A required for interaction with PCM1 region spans residues 1-111 (MLSPERLALP…HCLLQLLCPD (111 aa)). Positions 1 to 225 (MLSPERLALP…SCPPPALVKE (225 aa)) are required for interaction with TPGS1, LRRC49, and TTLL1.

It belongs to the CSTPP1 family. Interacts with PCM1. Interacts with TTLL1, TPGS1, TPGS2 and LRRC49; the interactions link CSTPP1 to the complex TPGC. Binds to alpha-tubulin.

It localises to the cytoplasm. It is found in the cytoskeleton. Its subcellular location is the microtubule organizing center. The protein resides in the centrosome. The protein localises to the centriolar satellite. Regulator of the tubulin polyglutamylase complex (TPGC) that controls cytoskeletal organization, nuclear shape, and cilium disassembly by balancing microtubule and actin assembly. Regulates the assembly and stability of the TPGC and thereby modulates polyglutamylation of the microtubule, which antagonizes MAP4 binding. The chain is Centriolar satellite-associated tubulin polyglutamylase complex regulator 1 (CSTPP1) from Bos taurus (Bovine).